The sequence spans 163 residues: Probable chemoreceptor glutamine deamidase CheD (163 aa).

This sequence belongs to the CheD family.

It catalyses the reaction L-glutaminyl-[protein] + H2O = L-glutamyl-[protein] + NH4(+). In terms of biological role, probably deamidates glutamine residues to glutamate on methyl-accepting chemotaxis receptors (MCPs), playing an important role in chemotaxis. The polypeptide is Probable chemoreceptor glutamine deamidase CheD (Borreliella afzelii (strain PKo) (Borrelia afzelii)).